Here is a 635-residue protein sequence, read N- to C-terminus: MSHNFTESYDIIVIGAGHAGVEASLAASRMGCKVLLATINIEMLAFMPCNPSIGGSAKGIVVREVDALGGEMAKNIDKSYIQMKMLNTGKGPAVRALRAQADKELYSKEMRKTVENQENLTLRQTMINEILVEDGKVIGVKTATHQEYAAKAVIVTTGTALRGEIIIGDLKYSSGPNHSLAAIPLADNLRDLGFEIGRFKTGTPPRVKASSINYDVTEIQPGDEKANHFSYTSRDEDYVKDQVPCWLTYTNAESHEIIQNNLHRAPMFSGIVKGVGPRYCPSIEDKIVRFADKERHQLFLEPEGRDTEEVYVQGLSTSLPEDVQKDLVHSIKGLENAEMMRTGYAIEYDMIMPHQLRATLETKKISGLFTAGQTNGTSGYEEAAGQGIIAGINAALKIQGKQELILKRSDGYIGVMIDDLVTKGTVEPYRLLTSRAEYRLILRHDNADMRLTEMGREIGLVDDERWARFEIKKNQFDNEMKRLESIKLKPVKETNAKVEALGFKPLTDAVTAKEFMRRPEVSYQDVVQFIGPAAEELDEKIIELIETEIKYEGYISKALDQVEKMKRMEEKRIPANIDWDDIDSIATEARQKFKKINPETIGQASRISGVNPADISILMVYLEGKSRSISKNQAK.

Gly-15–Gly-20 is a binding site for FAD. Gly-276–Phe-290 provides a ligand contact to NAD(+).

The protein belongs to the MnmG family. In terms of assembly, homodimer. Heterotetramer of two MnmE and two MnmG subunits. It depends on FAD as a cofactor.

The protein localises to the cytoplasm. Its function is as follows. NAD-binding protein involved in the addition of a carboxymethylaminomethyl (cmnm) group at the wobble position (U34) of certain tRNAs, forming tRNA-cmnm(5)s(2)U34. This is tRNA uridine 5-carboxymethylaminomethyl modification enzyme MnmG from Streptococcus sanguinis (strain SK36).